Reading from the N-terminus, the 145-residue chain is UPF0179 protein TV1250 (145 aa).

The protein belongs to the UPF0179 family.

This is UPF0179 protein TV1250 from Thermoplasma volcanium (strain ATCC 51530 / DSM 4299 / JCM 9571 / NBRC 15438 / GSS1).